Reading from the N-terminus, the 424-residue chain is Enolase (424 aa).

Residue glutamine 162 coordinates (2R)-2-phosphoglycerate. The active-site Proton donor is the glutamate 204. Mg(2+) is bound by residues aspartate 241, glutamate 284, and aspartate 311. The (2R)-2-phosphoglycerate site is built by lysine 336, arginine 365, serine 366, and lysine 387. Lysine 336 acts as the Proton acceptor in catalysis.

This sequence belongs to the enolase family. Mg(2+) serves as cofactor.

The protein localises to the cytoplasm. The protein resides in the secreted. It is found in the cell surface. It carries out the reaction (2R)-2-phosphoglycerate = phosphoenolpyruvate + H2O. Its pathway is carbohydrate degradation; glycolysis; pyruvate from D-glyceraldehyde 3-phosphate: step 4/5. Catalyzes the reversible conversion of 2-phosphoglycerate (2-PG) into phosphoenolpyruvate (PEP). It is essential for the degradation of carbohydrates via glycolysis. This chain is Enolase, found in Rhizobium johnstonii (strain DSM 114642 / LMG 32736 / 3841) (Rhizobium leguminosarum bv. viciae).